The chain runs to 556 residues: 2-succinyl-5-enolpyruvyl-6-hydroxy-3-cyclohexene-1-carboxylate synthase (556 aa).

This sequence belongs to the TPP enzyme family. MenD subfamily. As to quaternary structure, homodimer. Mg(2+) serves as cofactor. Mn(2+) is required as a cofactor. It depends on thiamine diphosphate as a cofactor.

The catalysed reaction is isochorismate + 2-oxoglutarate + H(+) = 5-enolpyruvoyl-6-hydroxy-2-succinyl-cyclohex-3-ene-1-carboxylate + CO2. Its pathway is quinol/quinone metabolism; 1,4-dihydroxy-2-naphthoate biosynthesis; 1,4-dihydroxy-2-naphthoate from chorismate: step 2/7. It participates in quinol/quinone metabolism; menaquinone biosynthesis. In terms of biological role, catalyzes the thiamine diphosphate-dependent decarboxylation of 2-oxoglutarate and the subsequent addition of the resulting succinic semialdehyde-thiamine pyrophosphate anion to isochorismate to yield 2-succinyl-5-enolpyruvyl-6-hydroxy-3-cyclohexene-1-carboxylate (SEPHCHC). The sequence is that of 2-succinyl-5-enolpyruvyl-6-hydroxy-3-cyclohexene-1-carboxylate synthase from Salmonella agona (strain SL483).